The chain runs to 383 residues: MSKKGRVLVAMSGGVDSSVTAVLLKERGYDVVGLTMKTWDYSTSGGRDGKEVGCCSIESMNDARVVATEHGFPHFVVDLREEFGDWVIERFTDEYLSGRTPNPCVLCNTHIKWDALLQRADDLDCEYIATGHYANVRYDDERDRYLLSRGLDRNKDQSYALWGLPQEHLARSIFPLGAYEKPEIREMAAEFGLDNVADKPDSYEICFIPDNDYPRFLKDRVDGLEEEVSGGTFVLSDGTVVGEHDGYPFYTIGQRRGLDLALGERVYVTDIDPETNTITVGPKEELMEQTLTAHEINLVKYPELDGERPAWGTIRYNDDGAGCLAWQPDEDTLKVAFAEPKRAITPGQSLVLYEDEDVLGGGWIHEVGGAENEAAERAAEAPA.

ATP contacts are provided by residues 10–17 (AMSGGVDS) and Met-36. The active-site Nucleophile is the Cys-107. A disulfide bridge links Cys-107 with Cys-206. Residue Gly-131 coordinates ATP. The segment at 155–157 (KDQ) is interaction with tRNA. The Cysteine persulfide intermediate role is filled by Cys-206. The tract at residues 315-316 (RY) is interaction with tRNA.

The protein belongs to the MnmA/TRMU family.

It localises to the cytoplasm. It catalyses the reaction S-sulfanyl-L-cysteinyl-[protein] + uridine(34) in tRNA + AH2 + ATP = 2-thiouridine(34) in tRNA + L-cysteinyl-[protein] + A + AMP + diphosphate + H(+). In terms of biological role, catalyzes the 2-thiolation of uridine at the wobble position (U34) of tRNA, leading to the formation of s(2)U34. This chain is tRNA-specific 2-thiouridylase MnmA, found in Salinibacter ruber (strain DSM 13855 / M31).